We begin with the raw amino-acid sequence, 280 residues long: 2-dehydro-3-deoxyphosphooctonate aldolase (280 aa).

It belongs to the KdsA family.

It is found in the cytoplasm. It catalyses the reaction D-arabinose 5-phosphate + phosphoenolpyruvate + H2O = 3-deoxy-alpha-D-manno-2-octulosonate-8-phosphate + phosphate. The protein operates within carbohydrate biosynthesis; 3-deoxy-D-manno-octulosonate biosynthesis; 3-deoxy-D-manno-octulosonate from D-ribulose 5-phosphate: step 2/3. It functions in the pathway bacterial outer membrane biogenesis; lipopolysaccharide biosynthesis. The polypeptide is 2-dehydro-3-deoxyphosphooctonate aldolase (Coxiella burnetii (strain CbuG_Q212) (Coxiella burnetii (strain Q212))).